The chain runs to 963 residues: Importin-13 (963 aa).

HEAT repeat units follow at residues 24–54 (ENVE…QAQV), 56–88 (PQAW…KISR), 95–135 (TDQY…LSMM), 142–179 (AVAD…EFQT), 194–231 (LAVE…SWVQ), 236–268 (LQDC…NAIS), 276–325 (VNTL…ALLD), 330–372 (WQSF…DDIL), 375–438 (EAEK…YEML), 440–476 (AELL…FQSI), 487–522 (VVPG…WLAD), 524–558 (PVMI…CREC), 562–600 (LPPY…LLSA), 603–648 (VEEI…SNLF), 676–716 (PVVV…VKTL), 720–754 (FAPM…VHIF), 761–803 (FPPI…ALKR), 815–845 (VKAV…TELL), 860–893 (EDGR…FALN), and 897–931 (FSLL…QQIL). Positions 45–111 (AQKWLMQAQV…KAQLFTQITR (67 aa)) constitute an Importin N-terminal domain.

The protein belongs to the importin beta family. Interacts with UBC9, RAN, RBM8A, eIF-1A and PAX6.

The protein localises to the cytoplasm. The protein resides in the nucleus. Its function is as follows. Functions in nuclear protein import as nuclear transport receptor. Serves as receptor for nuclear localization signals (NLS) in cargo substrates. Is thought to mediate docking of the importin/substrate complex to the nuclear pore complex (NPC) through binding to nucleoporin and the complex is subsequently translocated through the pore by an energy requiring, Ran-dependent mechanism. At the nucleoplasmic side of the NPC, Ran binds to the importin, the importin/substrate complex dissociates and importin is re-exported from the nucleus to the cytoplasm where GTP hydrolysis releases Ran. The directionality of nuclear import is thought to be conferred by an asymmetric distribution of the GTP- and GDP-bound forms of Ran between the cytoplasm and nucleus. Mediates the nuclear import of UBC9, the RBM8A/MAGOH complex, PAX6 and probably other members of the paired homeobox family. Also mediates nuclear export of eIF-1A, and the cytoplasmic release of eIF-1A is triggered by the loading of import substrates onto IPO13. The sequence is that of Importin-13 (Ipo13) from Mus musculus (Mouse).